A 209-amino-acid polypeptide reads, in one-letter code: Ribonuclease HII (209 aa).

The region spanning 7 to 198 is the RNase H type-2 domain; it reads GPVAGVDEAG…VAKAHQEWLH (192 aa). The a divalent metal cation site is built by Asp-13, Glu-14, and Asp-107.

It belongs to the RNase HII family. Requires Mn(2+) as cofactor. It depends on Mg(2+) as a cofactor.

The protein localises to the cytoplasm. The enzyme catalyses Endonucleolytic cleavage to 5'-phosphomonoester.. In terms of biological role, endonuclease that specifically degrades the RNA of RNA-DNA hybrids. The chain is Ribonuclease HII from Corynebacterium glutamicum (strain ATCC 13032 / DSM 20300 / JCM 1318 / BCRC 11384 / CCUG 27702 / LMG 3730 / NBRC 12168 / NCIMB 10025 / NRRL B-2784 / 534).